A 504-amino-acid chain; its full sequence is Pyruvate kinase (504 aa).

Residue Arg-53 coordinates substrate. Asn-55, Ser-57, Asp-88, and Thr-89 together coordinate K(+). Residue 55-58 (NFSH) participates in ATP binding. Positions 95 and 181 each coordinate ATP. Residue Glu-246 participates in Mg(2+) binding. Residues Gly-269, Asp-270, and Thr-302 each contribute to the substrate site. Asp-270 lines the Mg(2+) pocket.

Belongs to the pyruvate kinase family. In terms of assembly, homotetramer. Requires Mg(2+) as cofactor. K(+) is required as a cofactor.

The enzyme catalyses pyruvate + ATP = phosphoenolpyruvate + ADP + H(+). Its pathway is carbohydrate degradation; glycolysis; pyruvate from D-glyceraldehyde 3-phosphate: step 5/5. This Debaryomyces hansenii (strain ATCC 36239 / CBS 767 / BCRC 21394 / JCM 1990 / NBRC 0083 / IGC 2968) (Yeast) protein is Pyruvate kinase (PYK1).